The chain runs to 637 residues: Threonine--tRNA ligase (637 aa).

Residues 1–61 form the TGS domain; it reads MIKVTLKDGK…DKDCNLEILT (61 aa). A catalytic region spans residues 242–532; the sequence is DHRKIGKELD…LIEHYAGAFP (291 aa). Positions 333, 384, and 509 each coordinate Zn(2+).

This sequence belongs to the class-II aminoacyl-tRNA synthetase family. Homodimer. It depends on Zn(2+) as a cofactor.

Its subcellular location is the cytoplasm. It catalyses the reaction tRNA(Thr) + L-threonine + ATP = L-threonyl-tRNA(Thr) + AMP + diphosphate + H(+). Functionally, catalyzes the attachment of threonine to tRNA(Thr) in a two-step reaction: L-threonine is first activated by ATP to form Thr-AMP and then transferred to the acceptor end of tRNA(Thr). Also edits incorrectly charged L-seryl-tRNA(Thr). The chain is Threonine--tRNA ligase from Clostridium acetobutylicum (strain ATCC 824 / DSM 792 / JCM 1419 / IAM 19013 / LMG 5710 / NBRC 13948 / NRRL B-527 / VKM B-1787 / 2291 / W).